The primary structure comprises 252 residues: Endonuclease NucS (252 aa).

It belongs to the NucS endonuclease family.

It is found in the cytoplasm. Cleaves both 3' and 5' ssDNA extremities of branched DNA structures. The polypeptide is Endonuclease NucS (Sulfurisphaera tokodaii (strain DSM 16993 / JCM 10545 / NBRC 100140 / 7) (Sulfolobus tokodaii)).